The primary structure comprises 227 residues: Ribonuclease 3 (227 aa).

Residues 6–128 enclose the RNase III domain; that stretch reads ASDYQQRIGY…VIAAIYLDAD (123 aa). E41 serves as a coordination point for Mg(2+). D45 is an active-site residue. Mg(2+)-binding residues include D114 and E117. E117 is a catalytic residue. In terms of domain architecture, DRBM spans 155–225; the sequence is DPKTRLQEWL…ASHAINQLDS (71 aa). Basic and acidic residues predominate over residues 203-212; the sequence is GEGSSRRLAE. The disordered stretch occupies residues 203–227; sequence GEGSSRRLAEQDAASHAINQLDSNK.

Belongs to the ribonuclease III family. As to quaternary structure, homodimer. The cofactor is Mg(2+).

The protein localises to the cytoplasm. The catalysed reaction is Endonucleolytic cleavage to 5'-phosphomonoester.. Digests double-stranded RNA. Involved in the processing of primary rRNA transcript to yield the immediate precursors to the large and small rRNAs (23S and 16S). Processes some mRNAs, and tRNAs when they are encoded in the rRNA operon. Processes pre-crRNA and tracrRNA of type II CRISPR loci if present in the organism. In Xylella fastidiosa (strain M12), this protein is Ribonuclease 3.